A 225-amino-acid polypeptide reads, in one-letter code: Pre-mRNA-splicing factor SPF27 (225 aa).

Positions 138-222 (SNDNLALMIE…QGDENKENIR (85 aa)) form a coiled coil.

Belongs to the SPF27 family. Component of the pre-catalytic and catalytic spliceosome complexes. Component of the postcatalytic spliceosome P complex.

Its subcellular location is the nucleus. Required for pre-mRNA splicing as component of the activated spliceosome. May have a scaffolding role in the spliceosome assembly as it contacts all other components of the core complex. This chain is Pre-mRNA-splicing factor SPF27 (bcas2), found in Danio rerio (Zebrafish).